The sequence spans 443 residues: Thymidine phosphorylase (443 aa).

The protein belongs to the thymidine/pyrimidine-nucleoside phosphorylase family. As to quaternary structure, homodimer.

It carries out the reaction thymidine + phosphate = 2-deoxy-alpha-D-ribose 1-phosphate + thymine. The protein operates within pyrimidine metabolism; dTMP biosynthesis via salvage pathway; dTMP from thymine: step 1/2. Its function is as follows. The enzymes which catalyze the reversible phosphorolysis of pyrimidine nucleosides are involved in the degradation of these compounds and in their utilization as carbon and energy sources, or in the rescue of pyrimidine bases for nucleotide synthesis. This chain is Thymidine phosphorylase, found in Aeromonas salmonicida (strain A449).